Consider the following 383-residue polypeptide: Probable acyl-CoA dehydrogenase YdiO (383 aa).

Belongs to the acyl-CoA dehydrogenase family. FAD is required as a cofactor.

The catalysed reaction is a 2,3-saturated acyl-CoA + A = a 2,3-dehydroacyl-CoA + AH2. The sequence is that of Probable acyl-CoA dehydrogenase YdiO (ydiO) from Escherichia coli O157:H7.